Reading from the N-terminus, the 21-residue chain is Ocellatin-3 (21 aa).

Residue Ile-21 is modified to Isoleucine amide.

As to expression, expressed by the skin dorsal glands.

It is found in the secreted. Has hemolytic activity against human erythrocytes and antibacterial activity against the Gram-negative bacterium E.coli. The polypeptide is Ocellatin-3 (Leptodactylus ocellatus (Argus frog)).